Consider the following 382-residue polypeptide: Intermediate transcription factor 3 large subunit (382 aa).

It belongs to the poxviruses A23 family. As to quaternary structure, heterodimer of a 45 kDa and a 32 kDa subunit.

Acts with RNA polymerase to initiate transcription from intermediate gene promoters. The protein is Intermediate transcription factor 3 large subunit (VITF3L) of Ectromelia virus (strain Moscow) (ECTV).